We begin with the raw amino-acid sequence, 270 residues long: NAD kinase (270 aa).

Asp63 functions as the Proton acceptor in the catalytic mechanism. Residues 63–64 (DG), Arg68, 131–132 (NE), Lys142, Arg159, Asp161, 172–177 (TAYAMS), Ala196, and Gln230 each bind NAD(+).

The protein belongs to the NAD kinase family. It depends on a divalent metal cation as a cofactor.

The protein localises to the cytoplasm. It carries out the reaction NAD(+) + ATP = ADP + NADP(+) + H(+). Involved in the regulation of the intracellular balance of NAD and NADP, and is a key enzyme in the biosynthesis of NADP. Catalyzes specifically the phosphorylation on 2'-hydroxyl of the adenosine moiety of NAD to yield NADP. This is NAD kinase from Methanoregula boonei (strain DSM 21154 / JCM 14090 / 6A8).